We begin with the raw amino-acid sequence, 552 residues long: Cation/acetate symporter ActP (552 aa).

14 helical membrane passes run 5 to 25, 35 to 55, 78 to 98, 105 to 125, 151 to 171, 185 to 205, 208 to 228, 264 to 284, 305 to 325, 357 to 377, 407 to 427, 431 to 451, 466 to 486, and 499 to 519; these read FMML…DALT, IQAI…TYWA, GLAI…SALV, GLIY…LIAE, LSAC…MVGA, VAVI…GMLA, WVQI…AVMV, ISAL…PHIL, GFMG…ILLV, FFLG…VAGL, VSKI…ILFE, IAFM…PIII, IGGW…PTIW, and YDYP…FFSI.

Belongs to the sodium:solute symporter (SSF) (TC 2.A.21) family.

It is found in the cell inner membrane. Its function is as follows. Transports acetate. The chain is Cation/acetate symporter ActP from Pectobacterium carotovorum subsp. carotovorum (strain PC1).